We begin with the raw amino-acid sequence, 91 residues long: Large ribosomal subunit protein eL34 (91 aa).

It belongs to the eukaryotic ribosomal protein eL34 family.

The protein is Large ribosomal subunit protein eL34 of Thermofilum pendens (strain DSM 2475 / Hrk 5).